We begin with the raw amino-acid sequence, 242 residues long: uncharacterized protein (242 aa).

In terms of domain architecture, S4 RNA-binding spans 2–62 (EKAYKLLSVQ…VEKPSVIFED (61 aa)). Residue D93 is part of the active site.

This sequence belongs to the pseudouridine synthase RluA family.

It catalyses the reaction a uridine in RNA = a pseudouridine in RNA. This is an uncharacterized protein from Helicobacter pylori (strain J99 / ATCC 700824) (Campylobacter pylori J99).